The chain runs to 222 residues: UPF0758 protein YicR (222 aa).

Residues 100-222 (PLLSPEMTRE…YVSFAERGWI (123 aa)) form the MPN domain. Residues His-171, His-173, and Asp-184 each contribute to the Zn(2+) site. The JAMM motif motif lies at 171 to 184 (HNHPSGCAEPSKAD).

The protein belongs to the UPF0758 family. YicR subfamily.

The chain is UPF0758 protein YicR from Escherichia coli O45:K1 (strain S88 / ExPEC).